Reading from the N-terminus, the 643-residue chain is 1-deoxy-D-xylulose-5-phosphate synthase (643 aa).

Residues histidine 78 and 119-121 each bind thiamine diphosphate; that span reads AHS. Aspartate 150 provides a ligand contact to Mg(2+). Thiamine diphosphate-binding positions include 151–152, asparagine 179, tyrosine 288, and glutamate 370; that span reads GS. Residue asparagine 179 participates in Mg(2+) binding.

It belongs to the transketolase family. DXPS subfamily. As to quaternary structure, homodimer. Mg(2+) serves as cofactor. It depends on thiamine diphosphate as a cofactor.

The catalysed reaction is D-glyceraldehyde 3-phosphate + pyruvate + H(+) = 1-deoxy-D-xylulose 5-phosphate + CO2. Its pathway is metabolic intermediate biosynthesis; 1-deoxy-D-xylulose 5-phosphate biosynthesis; 1-deoxy-D-xylulose 5-phosphate from D-glyceraldehyde 3-phosphate and pyruvate: step 1/1. Its function is as follows. Catalyzes the acyloin condensation reaction between C atoms 2 and 3 of pyruvate and glyceraldehyde 3-phosphate to yield 1-deoxy-D-xylulose-5-phosphate (DXP). The polypeptide is 1-deoxy-D-xylulose-5-phosphate synthase (Brucella abortus (strain S19)).